Reading from the N-terminus, the 470-residue chain is V-type ATP synthase beta chain (470 aa).

This sequence belongs to the ATPase alpha/beta chains family.

Produces ATP from ADP in the presence of a proton gradient across the membrane. The V-type beta chain is a regulatory subunit. The chain is V-type ATP synthase beta chain from Deinococcus geothermalis (strain DSM 11300 / CIP 105573 / AG-3a).